We begin with the raw amino-acid sequence, 215 residues long: MANVYDWFQERLEIQALADDVTSKYVPPHVNIFYCLGGITLTCFLIQFATGFAMTFYYKPTVTEAYASVQYIMNEVSFGWLIRSIHRWSASMMVLMMILHVFRVYLTGGFKKPRELTWISGVILAVITVSFGVTGYSLPWDQVGYWAVKIVSGVPEAIPVVGVLISDLLRGGSSVGQATLTRYYSAHTFVLPWLIAVFMLLHFLMIRKQGISGPL.

Over 1 to 31 the chain is Cytoplasmic; that stretch reads MANVYDWFQERLEIQALADDVTSKYVPPHVN. The helical transmembrane segment at 32–52 threads the bilayer; sequence IFYCLGGITLTCFLIQFATGF. Cys35 is a binding site for heme c. The Lumenal, thylakoid portion of the chain corresponds to 53–89; it reads AMTFYYKPTVTEAYASVQYIMNEVSFGWLIRSIHRWS. Heme b-binding residues include Arg83, His86, His100, and Arg103. Residues 90–110 traverse the membrane as a helical segment; sequence ASMMVLMMILHVFRVYLTGGF. The Cytoplasmic segment spans residues 111 to 115; that stretch reads KKPRE. Residues 116 to 136 traverse the membrane as a helical segment; sequence LTWISGVILAVITVSFGVTGY. The Lumenal, thylakoid portion of the chain corresponds to 137 to 185; that stretch reads SLPWDQVGYWAVKIVSGVPEAIPVVGVLISDLLRGGSSVGQATLTRYYS. The chain crosses the membrane as a helical span at residues 186-206; that stretch reads AHTFVLPWLIAVFMLLHFLMI. Heme b-binding residues include His187 and His202. At 207–215 the chain is on the cytoplasmic side; that stretch reads RKQGISGPL. Heme c is bound at residue Lys208.

It belongs to the cytochrome b family. PetB subfamily. As to quaternary structure, the 4 large subunits of the cytochrome b6-f complex are cytochrome b6, subunit IV (17 kDa polypeptide, PetD), cytochrome f and the Rieske protein, while the 4 small subunits are PetG, PetL, PetM and PetN. The complex functions as a dimer. Heme b serves as cofactor. It depends on heme c as a cofactor.

The protein localises to the cellular thylakoid membrane. In terms of biological role, component of the cytochrome b6-f complex, which mediates electron transfer between photosystem II (PSII) and photosystem I (PSI), cyclic electron flow around PSI, and state transitions. This Mastigocladus laminosus (Fischerella sp.) protein is Cytochrome b6.